A 154-amino-acid polypeptide reads, in one-letter code: Nuclear cap-binding protein subunit 2 (154 aa).

Residues Y10, Y33, 102–106 (RCDWD), 113–117 (RQYGR), and 123–124 (QV) each bind mRNA. Residues 30–108 (STLYMGNLSF…RIIRCDWDAG (79 aa)) form the RRM domain.

The protein belongs to the RRM NCBP2 family. As to quaternary structure, component of the nuclear cap-binding complex (CBC), a heterodimer composed of Cbp80 and Cbp20 that interacts with m7GpppG-capped RNA.

It localises to the nucleus. Component of the cap-binding complex (CBC), which binds co-transcriptionally to the 5' cap of pre-mRNAs and is involved in various processes such as pre-mRNA splicing and RNA-mediated gene silencing (RNAi). The CBC complex is involved in miRNA-mediated RNA interference and is required for primary microRNAs (miRNAs) processing. Also involved in innate immunity via the short interfering RNAs (siRNAs) processing machinery by restricting the viral RNA production. In the CBC complex, Cbp20 recognizes and binds capped RNAs (m7GpppG-capped RNA) but requires Cbp80 to stabilize the movement of its N-terminal loop and lock the CBC into a high affinity cap-binding state with the cap structure. This is Nuclear cap-binding protein subunit 2 from Bombyx mori (Silk moth).